The sequence spans 476 residues: Bifunctional protein HldE (476 aa).

Residues 1–318 (MKPTLPNYDQ…AEAIHGSQDS (318 aa)) form a ribokinase region. 195-198 (NMLE) contributes to the ATP binding site. Aspartate 264 is an active-site residue. Residues 344 to 476 (MTNGCFDILH…IIEAIKGGRG (133 aa)) are cytidylyltransferase.

In the N-terminal section; belongs to the carbohydrate kinase PfkB family. The protein in the C-terminal section; belongs to the cytidylyltransferase family. In terms of assembly, homodimer.

It catalyses the reaction D-glycero-beta-D-manno-heptose 7-phosphate + ATP = D-glycero-beta-D-manno-heptose 1,7-bisphosphate + ADP + H(+). The enzyme catalyses D-glycero-beta-D-manno-heptose 1-phosphate + ATP + H(+) = ADP-D-glycero-beta-D-manno-heptose + diphosphate. It functions in the pathway nucleotide-sugar biosynthesis; ADP-L-glycero-beta-D-manno-heptose biosynthesis; ADP-L-glycero-beta-D-manno-heptose from D-glycero-beta-D-manno-heptose 7-phosphate: step 1/4. It participates in nucleotide-sugar biosynthesis; ADP-L-glycero-beta-D-manno-heptose biosynthesis; ADP-L-glycero-beta-D-manno-heptose from D-glycero-beta-D-manno-heptose 7-phosphate: step 3/4. Functionally, catalyzes the phosphorylation of D-glycero-D-manno-heptose 7-phosphate at the C-1 position to selectively form D-glycero-beta-D-manno-heptose-1,7-bisphosphate. In terms of biological role, catalyzes the ADP transfer from ATP to D-glycero-beta-D-manno-heptose 1-phosphate, yielding ADP-D-glycero-beta-D-manno-heptose. In Aliivibrio fischeri (strain MJ11) (Vibrio fischeri), this protein is Bifunctional protein HldE.